The chain runs to 299 residues: Ankyrin repeat domain-containing protein 54 (299 aa).

The disordered stretch occupies residues 1 to 27 (MAATGGGADDESRSGRSSSDGECAVAP). At alanine 2 the chain carries N-acetylalanine. Serine 62 is subject to Phosphoserine. The short motif at 98–116 (RRLGPTGKEVHALKRLRDS) is the Nuclear localization signal (NLS) element. ANK repeat units follow at residues 108-137 (HALK…DPCA), 141-170 (KGRT…DPNQ), 174-203 (LGNT…RVDA), and 207-239 (AGRT…EVKQ). Residues 140–240 (DKGRTALHFA…EAVRLEVKQI (101 aa)) form an LYN-binding region. Positions 282–292 (LLASFTSLSLQ) match the Nuclear export signal (NES) motif.

As to quaternary structure, interacts (via ankyrin repeat region) with LYN (via SH3-domain) in an activation-independent status of LYN. Forms a multiprotein complex with LYN and HCLS1. Interacts with TSN2, VAV1, DBNL and LASP1. As to expression, expressed in a variety of hemopoietic cell lines and tissue with high levels in testis. Highly expressed in ciliated cells.

It is found in the nucleus. The protein localises to the cytoplasm. Its subcellular location is the midbody. Its function is as follows. Plays an important role in regulating intracellular signaling events associated with erythroid terminal differentiation. This chain is Ankyrin repeat domain-containing protein 54 (Ankrd54), found in Mus musculus (Mouse).